A 414-amino-acid chain; its full sequence is Probable protein phosphatase 2C 80 (414 aa).

A PPM-type phosphatase domain is found at 174–411 (SCYLPHPEKE…DDITAVVSYV (238 aa)). Positions 204, 205, 336, and 402 each coordinate Mn(2+).

Belongs to the PP2C family. The cofactor is Mg(2+). Mn(2+) is required as a cofactor.

The enzyme catalyses O-phospho-L-seryl-[protein] + H2O = L-seryl-[protein] + phosphate. It catalyses the reaction O-phospho-L-threonyl-[protein] + H2O = L-threonyl-[protein] + phosphate. This is Probable protein phosphatase 2C 80 from Arabidopsis thaliana (Mouse-ear cress).